The chain runs to 236 residues: MTKRYWNINLEEMMGAGVHFGHGTRKWNPQIAPFISAKRKGIHITNLTRTARFLSEACDLVFDAARRGKKFLIVGTNNKAAYSVARASRKARCHYVNKKWLAGMLTNWSTTETRLNKFRDLRMEQKKGGLNHLPKRDATMFKRQLARLQTYLGGIQYMTGLPDIVIIVDQHKEYTALRECITLGIPTICLIDTNCDPNLSDISIPANDDAISSIRFILNKLVFAICEGRFSYLRSP.

The protein belongs to the universal ribosomal protein uS2 family.

It is found in the plastid. In Cuscuta exaltata (Tall dodder), this protein is Small ribosomal subunit protein uS2c (rps2).